A 252-amino-acid polypeptide reads, in one-letter code: uncharacterized protein (252 aa).

It belongs to the LarE family.

This is an uncharacterized protein from Methanocaldococcus jannaschii (strain ATCC 43067 / DSM 2661 / JAL-1 / JCM 10045 / NBRC 100440) (Methanococcus jannaschii).